A 179-amino-acid polypeptide reads, in one-letter code: O-acetyl-ADP-ribose deacetylase (179 aa).

One can recognise a Macro domain in the interval 1-175 (MTSRLQVIQG…LYARLLTQQG (175 aa)). Residues 11–12 (DI), asparagine 25, 33–35 (GVD), and 122–126 (STGVY) contribute to the substrate site. Residue aspartate 35 is the Proton acceptor of the active site.

Belongs to the MacroD-type family. YmdB subfamily. In terms of assembly, homodimer. Interacts with RNase III.

The enzyme catalyses 3''-O-acetyl-ADP-D-ribose + H2O = ADP-D-ribose + acetate + H(+). The catalysed reaction is 2''-O-acetyl-ADP-D-ribose + H2O = ADP-D-ribose + acetate + H(+). Functionally, deacetylates O-acetyl-ADP ribose to yield ADP-ribose and free acetate. Down-regulates ribonuclease 3 (RNase III) activity. Acts by interacting directly with the region of the ribonuclease that is required for dimerization/activation. The chain is O-acetyl-ADP-ribose deacetylase from Salmonella newport (strain SL254).